The primary structure comprises 777 residues: Santalene and bergamotene synthase, chloroplastic (777 aa).

The transit peptide at 1–36 (MIVGYRSTIITLSHPKLGNGKTISSNAIFQRSCRVR) directs the protein to the chloroplast. Positions 530 and 534 each coordinate Mg(2+). The short motif at 530-534 (DDQFD) is the DDXXD motif element.

Belongs to the terpene synthase family. Tpse subfamily. The cofactor is Mg(2+). It depends on Mn(2+) as a cofactor.

The protein localises to the plastid. The protein resides in the chloroplast. It carries out the reaction (2Z,6Z)-farnesyl diphosphate = (+)-alpha-santalene + diphosphate. The enzyme catalyses (2Z,6Z)-farnesyl diphosphate = (+)-endo-beta-bergamotene + diphosphate. The catalysed reaction is (2Z,6Z)-farnesyl diphosphate = (1S,5S,6S)-alpha-bergamotene + diphosphate. Functionally, (2Z,6Z)-farnesyl diphosphate cyclizing enzyme. Produces (+)-alpha-santalene, (+)-endo-beta-bergamotene, (-)-endo-alpha-bergamotene, and at lower amounts, (-)exo-alpha-bergamotene and (+)-epi-beta-santalene. Not able to use geranyl diphosphate, E,E-farnesyl diphosphate or E,E,E-geranylgeranyl diphosphate as substrates, but able to use Neryl diphosphate to make the monoterpene terpineol. This Solanum habrochaites (Wild tomato) protein is Santalene and bergamotene synthase, chloroplastic (SBS).